Reading from the N-terminus, the 573-residue chain is Urease subunit alpha (573 aa).

Residues 136 to 573 (GGIDCHVHFI…LPMAQRYFLF (438 aa)) enclose the Urease domain. Ni(2+)-binding residues include His141, His143, and Lys224. Lys224 carries the N6-carboxylysine modification. His226 is a substrate binding site. Ni(2+) is bound by residues His253 and His279. His327 functions as the Proton donor in the catalytic mechanism. Asp367 is a binding site for Ni(2+).

This sequence belongs to the metallo-dependent hydrolases superfamily. Urease alpha subunit family. Heterotrimer of UreA (gamma), UreB (beta) and UreC (alpha) subunits. Three heterotrimers associate to form the active enzyme. Requires Ni cation as cofactor. Carboxylation allows a single lysine to coordinate two nickel ions.

Its subcellular location is the cytoplasm. The enzyme catalyses urea + 2 H2O + H(+) = hydrogencarbonate + 2 NH4(+). Its pathway is nitrogen metabolism; urea degradation; CO(2) and NH(3) from urea (urease route): step 1/1. The polypeptide is Urease subunit alpha (Rhodococcus opacus (strain B4)).